The primary structure comprises 103 residues: Large ribosomal subunit protein bL21 (103 aa).

The protein belongs to the bacterial ribosomal protein bL21 family. Part of the 50S ribosomal subunit. Contacts protein L20.

This protein binds to 23S rRNA in the presence of protein L20. This chain is Large ribosomal subunit protein bL21, found in Paraburkholderia phytofirmans (strain DSM 17436 / LMG 22146 / PsJN) (Burkholderia phytofirmans).